Consider the following 2177-residue polypeptide: Mediator of RNA polymerase II transcription subunit 12 (2177 aa).

The disordered stretch occupies residues 12 to 35 (RPLKRPRLGPPDVYPQDPKQKEDE). An N6-acetyllysine modification is found at Lys80. Tyr166 carries the phosphotyrosine modification. Disordered regions lie at residues 323–344 (QSTS…TPST), 627–669 (GAPG…MDID), 690–717 (TMPC…PKEK), and 1241–1266 (TVTG…QGGR). Phosphoserine is present on residues Ser635, Ser665, Ser698, and Ser700. The segment covering 702–717 (EKPDVEKEVKPPPKEK) has biased composition (basic and acidic residues). Ser1258 and Ser1269 each carry phosphoserine. A compositionally biased stretch (low complexity) spans 1394–1411 (AETGSSSGSTASNMPSSS). Disordered regions lie at residues 1394–1415 (AETG…KTKP), 1450–1474 (ELEK…KSMS), and 1738–1829 (YLEP…PGSI). Basic and acidic residues-rich tracts occupy residues 1450-1469 (ELEK…DRQK) and 1758-1771 (EPEK…KTDK). The tract at residues 1616–2051 (LAKKLQKELG…VRSTAILPEQ (436 aa)) is interaction with CTNNB1 and GLI3. The span at 1784-1793 (KKSTKGKKRS) shows a compositional bias: basic residues. At Lys1798 the chain carries N6-acetyllysine. Asymmetric dimethylarginine; alternate is present on Arg1899. An Omega-N-methylarginine; alternate modification is found at Arg1899. Arg1910 is subject to Omega-N-methylarginine. 2 disordered regions span residues 1919-1938 (QGML…SYGL) and 1967-1989 (SYSS…DPTR). Positions 1927–1938 (VHQMTPSSSYGL) are enriched in polar residues. The span at 1967–1980 (SYSSQPYQSTHPST) shows a compositional bias: low complexity. Asymmetric dimethylarginine occurs at positions 1994 and 2015. 3 stretches are compositionally biased toward low complexity: residues 2115–2125 (QHQQQQQQQAA), 2133–2149 (SQPQ…QQQQ), and 2158–2171 (LQQQ…QPST). 2 disordered regions span residues 2115–2149 (QHQQ…QQQQ) and 2158–2177 (LQQQ…FGRY).

It belongs to the Mediator complex subunit 12 family. As to quaternary structure, component of the Mediator complex, which is composed of MED1, MED4, MED6, MED7, MED8, MED9, MED10, MED11, MED12, MED13, MED13L, MED14, MED15, MED16, MED17, MED18, MED19, MED20, MED21, MED22, MED23, MED24, MED25, MED26, MED27, MED29, MED30, MED31, CCNC, CDK8 and CDC2L6/CDK11. The MED12, MED13, CCNC and CDK8 subunits form a distinct module termed the CDK8 module. Mediator containing the CDK8 module is less active than Mediator lacking this module in supporting transcriptional activation. Individual preparations of the Mediator complex lacking one or more distinct subunits have been variously termed ARC, CRSP, DRIP, PC2, SMCC and TRAP. Also interacts with CTNNB1 and GLI3. As to expression, ubiquitous.

The protein localises to the nucleus. Its function is as follows. Component of the Mediator complex, a coactivator involved in the regulated transcription of nearly all RNA polymerase II-dependent genes. Mediator functions as a bridge to convey information from gene-specific regulatory proteins to the basal RNA polymerase II transcription machinery. Mediator is recruited to promoters by direct interactions with regulatory proteins and serves as a scaffold for the assembly of a functional pre-initiation complex with RNA polymerase II and the general transcription factors. This subunit may specifically regulate transcription of targets of the Wnt signaling pathway and SHH signaling pathway. This is Mediator of RNA polymerase II transcription subunit 12 (MED12) from Homo sapiens (Human).